The chain runs to 274 residues: Putative pyruvate, phosphate dikinase regulatory protein (274 aa).

An ADP-binding site is contributed by 153–160 (GISRTSKT).

It belongs to the pyruvate, phosphate/water dikinase regulatory protein family. PDRP subfamily.

It catalyses the reaction N(tele)-phospho-L-histidyl/L-threonyl-[pyruvate, phosphate dikinase] + ADP = N(tele)-phospho-L-histidyl/O-phospho-L-threonyl-[pyruvate, phosphate dikinase] + AMP + H(+). The enzyme catalyses N(tele)-phospho-L-histidyl/O-phospho-L-threonyl-[pyruvate, phosphate dikinase] + phosphate + H(+) = N(tele)-phospho-L-histidyl/L-threonyl-[pyruvate, phosphate dikinase] + diphosphate. In terms of biological role, bifunctional serine/threonine kinase and phosphorylase involved in the regulation of the pyruvate, phosphate dikinase (PPDK) by catalyzing its phosphorylation/dephosphorylation. This chain is Putative pyruvate, phosphate dikinase regulatory protein, found in Bartonella tribocorum (strain CIP 105476 / IBS 506).